The chain runs to 137 residues: Large ribosomal subunit protein eL28 (137 aa).

N-acetylserine is present on serine 2. Glycyl lysine isopeptide (Lys-Gly) (interchain with G-Cter in SUMO2) cross-links involve residues lysine 58 and lysine 65. Position 115 is a phosphoserine (serine 115).

Belongs to the eukaryotic ribosomal protein eL28 family. As to quaternary structure, component of the large ribosomal subunit.

The protein resides in the cytoplasm. Its function is as follows. Component of the large ribosomal subunit. The ribosome is a large ribonucleoprotein complex responsible for the synthesis of proteins in the cell. The polypeptide is Large ribosomal subunit protein eL28 (Rpl28) (Rattus norvegicus (Rat)).